Consider the following 696-residue polypeptide: UvrABC system protein C (696 aa).

The region spanning 16-95 (TEPGVYKFRD…IKRFDPRFNV (80 aa)) is the GIY-YIG domain. Residues 208–243 (DKVTRKLNADMMAAAEELDFERAARLRDDLEAIDKV) form the UVR domain.

It belongs to the UvrC family. Interacts with UvrB in an incision complex.

The protein localises to the cytoplasm. In terms of biological role, the UvrABC repair system catalyzes the recognition and processing of DNA lesions. UvrC both incises the 5' and 3' sides of the lesion. The N-terminal half is responsible for the 3' incision and the C-terminal half is responsible for the 5' incision. In Corynebacterium glutamicum (strain R), this protein is UvrABC system protein C.